Here is a 197-residue protein sequence, read N- to C-terminus: UPF0725 protein At5g41640 (197 aa).

It belongs to the UPF0725 (EMB2204) family.

This Arabidopsis thaliana (Mouse-ear cress) protein is UPF0725 protein At5g41640.